Consider the following 206-residue polypeptide: Guanylate kinase (206 aa).

One can recognise a Guanylate kinase-like domain in the interval 6–185 (GAILVLSGPS…AAKTLRIIAD (180 aa)). 13-20 (GPSGAGKS) is a binding site for ATP.

It belongs to the guanylate kinase family.

It localises to the cytoplasm. It carries out the reaction GMP + ATP = GDP + ADP. In terms of biological role, essential for recycling GMP and indirectly, cGMP. This chain is Guanylate kinase, found in Sulfurimonas denitrificans (strain ATCC 33889 / DSM 1251) (Thiomicrospira denitrificans (strain ATCC 33889 / DSM 1251)).